An 85-amino-acid polypeptide reads, in one-letter code: U1-ctenitoxin-Pn1a (85 aa).

Positions 1-16 (MKVAIVFLSLLVLAFA) are cleaved as a signal peptide. Positions 17–34 (SESIEENREEFPVEESAR) are excised as a propeptide. 5 disulfide bridges follow: Cys-35–Cys-49, Cys-42–Cys-55, Cys-46–Cys-81, Cys-48–Cys-65, and Cys-57–Cys-63. Positions 82–85 (QNKI) are excised as a propeptide.

This sequence belongs to the neurotoxin 03 (Tx2) family. 05 subfamily. Expressed by the venom gland.

Its subcellular location is the secreted. In terms of biological role, insecticidal neurotoxin that reversibly inhibits the N-methyl-D-aspartate (NMDA)-subtype of ionotropic glutamate receptor (GRIN) and inhibits inactivation of insect sodium channels (Nav). In vivo, is highly toxic to insects. This is U1-ctenitoxin-Pn1a from Phoneutria nigriventer (Brazilian armed spider).